A 295-amino-acid polypeptide reads, in one-letter code: Phosphatidylserine decarboxylase proenzyme (295 aa).

Residues Asp-113, His-169, and Ser-256 each act as charge relay system; for autoendoproteolytic cleavage activity in the active site. The Schiff-base intermediate with substrate; via pyruvic acid; for decarboxylase activity role is filled by Ser-256. Ser-256 is subject to Pyruvic acid (Ser); by autocatalysis.

It belongs to the phosphatidylserine decarboxylase family. PSD-B subfamily. Prokaryotic type II sub-subfamily. As to quaternary structure, heterodimer of a large membrane-associated beta subunit and a small pyruvoyl-containing alpha subunit. Requires pyruvate as cofactor. Is synthesized initially as an inactive proenzyme. Formation of the active enzyme involves a self-maturation process in which the active site pyruvoyl group is generated from an internal serine residue via an autocatalytic post-translational modification. Two non-identical subunits are generated from the proenzyme in this reaction, and the pyruvate is formed at the N-terminus of the alpha chain, which is derived from the carboxyl end of the proenzyme. The autoendoproteolytic cleavage occurs by a canonical serine protease mechanism, in which the side chain hydroxyl group of the serine supplies its oxygen atom to form the C-terminus of the beta chain, while the remainder of the serine residue undergoes an oxidative deamination to produce ammonia and the pyruvoyl prosthetic group on the alpha chain. During this reaction, the Ser that is part of the protease active site of the proenzyme becomes the pyruvoyl prosthetic group, which constitutes an essential element of the active site of the mature decarboxylase.

Its subcellular location is the cell membrane. It carries out the reaction a 1,2-diacyl-sn-glycero-3-phospho-L-serine + H(+) = a 1,2-diacyl-sn-glycero-3-phosphoethanolamine + CO2. It functions in the pathway phospholipid metabolism; phosphatidylethanolamine biosynthesis; phosphatidylethanolamine from CDP-diacylglycerol: step 2/2. In terms of biological role, catalyzes the formation of phosphatidylethanolamine (PtdEtn) from phosphatidylserine (PtdSer). In Clostridium botulinum (strain 657 / Type Ba4), this protein is Phosphatidylserine decarboxylase proenzyme.